A 370-amino-acid chain; its full sequence is MKFARSGAAVSLLAAGTLVLTACGGGTNSSSSGAGGTSGSVHCGGKKELHSSGSTAQENAMEQFVYAYVRSCPGYTLDYNANGSGAGVTQFLNNETDFAGSDVPLNPSTGQPDRAAERCGSPAWDLPTVFGPIAITYNIKGVSTLNLDGPTTAKIFNGTITVWNDPQIQALNSGTDLPPTPISVIFRSDKSGTSDNFQKYLDGASNGAWGKGASETFNGGVGVGASGNNGTSALLQTTDGSITYNEWSFAVGKQLNMAQIITSAGPDPVAITTESVGKTIAGAKIMGQGNDLVLDTSSFYRPTQPGSYPIVLATYEIVCSKYPDATTGTAVRAFMQAAIGPGQEGLDQYGSIPLPKSFQAKLAAAVNAIS.

The signal sequence occupies residues 1–22; it reads MKFARSGAAVSLLAAGTLVLTA. Residue Cys-23 is the site of N-palmitoyl cysteine attachment. Residue Cys-23 is the site of S-diacylglycerol cysteine attachment. Phosphate-binding positions include 54–56, Ser-84, Asp-102, and 191–193; these read STA and SGT.

The protein belongs to the PstS family. In terms of assembly, the complex is composed of two ATP-binding proteins (PstB), two transmembrane proteins (PstC and PstA) and a solute-binding protein (PstS).

It localises to the cell membrane. Its subcellular location is the secreted. Its function is as follows. Functions in inorganic phosphate uptake, a phosphate-binding protein, although probably not the main uptake protein under phosphate starvation. Part of the ABC transporter complex PstSACB involved in phosphate import. This chain is Phosphate-binding protein PstS2 (pstS2), found in Mycobacterium bovis (strain BCG / Pasteur 1173P2).